Consider the following 547-residue polypeptide: Isoflavonoid 7-O-beta-apiosyl-glucoside beta-glycosidase (547 aa).

Positions 1 to 31 (MHAMTFKAILLLGLLALVSTSASIAFAKEVR) are cleaved as a signal peptide. An a beta-D-glucoside-binding site is contributed by Q59. N-linked (GlcNAc...) asparagine glycans are attached at residues N72 and N132. H159 contributes to the a beta-D-glucoside binding site. N175 carries an N-linked (GlcNAc...) asparagine glycan. A beta-D-glucoside is bound at residue 204–205 (NE). E205 (proton donor) is an active-site residue. The cysteines at positions 224 and 232 are disulfide-linked. N285 is a glycosylation site (N-linked (GlcNAc...) asparagine). A beta-D-glucoside is bound by residues Y348, E419, W468, 475–476 (EW), and F484. Residue E419 is the Nucleophile of the active site. N490 carries an N-linked (GlcNAc...) asparagine glycan.

Belongs to the glycosyl hydrolase 1 family. As to quaternary structure, homotetramer.

The enzyme catalyses 7-[beta-D-apiofuranosyl-(1-&gt;6)-beta-D-glucopyranosyloxy]isoflavonoid + H2O = a 7-hydroxyisoflavonoid + beta-D-apiofuranosyl-(1-&gt;6)-D-glucose.. With respect to regulation, not inhibited by iron, calcium, mercury, manganese, zinc or EDTA. In terms of biological role, hydrolyzes dalpatein 7-O-beta-D-apiofuranosyl-(1-&gt;6)-beta-D-glucopyranoside and dalnigrein 7-O-beta-D-apiofuranosyl-(1-&gt;6)-beta-D-glucopyranoside. Also has activity towards pNP-beta-D-fucoside and pNP-beta-D-glucoside, but not pNP-beta-cellobioside. This Dalbergia nigrescens (Thai blackwood) protein is Isoflavonoid 7-O-beta-apiosyl-glucoside beta-glycosidase.